Reading from the N-terminus, the 469-residue chain is GTPase Der (469 aa).

EngA-type G domains lie at 30 to 193 (PVLA…PEVA) and 203 to 376 (RRVA…ASWD). GTP is bound by residues 36–43 (GRPNVGKS), 83–87 (DTGGW), 145–148 (NKVD), 209–216 (GKPNVGKS), 256–260 (DTAGL), and 321–324 (NKWD). Residues 377-459 (TRIPTGPLNS…PIRINVRVRE (83 aa)) enclose the KH-like domain.

Belongs to the TRAFAC class TrmE-Era-EngA-EngB-Septin-like GTPase superfamily. EngA (Der) GTPase family. Associates with the 50S ribosomal subunit.

GTPase that plays an essential role in the late steps of ribosome biogenesis. In Mycobacterium ulcerans (strain Agy99), this protein is GTPase Der.